Reading from the N-terminus, the 476-residue chain is Chromosomal replication initiator protein DnaA (476 aa).

The tract at residues 1-87 (MSDRSDPTHA…AGVSNFAIVV (87 aa)) is domain I, interacts with DnaA modulators. The domain II stretch occupies residues 87–131 (VNPGIAQDAFAQHPEPAEQPYIETPTITAPTDNPGLPASPSRGDS). The tract at residues 132–348 (RLNPKYGFDT…GTLIRVTAFA (217 aa)) is domain III, AAA+ region. Residues Gly-176, Gly-178, Lys-179, and Thr-180 each coordinate ATP. The tract at residues 349–476 (SLNKTPVDLA…IKQNHRYGKM (128 aa)) is domain IV, binds dsDNA.

Belongs to the DnaA family. In terms of assembly, oligomerizes as a right-handed, spiral filament on DNA at oriC.

It is found in the cytoplasm. Its function is as follows. Plays an essential role in the initiation and regulation of chromosomal replication. ATP-DnaA binds to the origin of replication (oriC) to initiate formation of the DNA replication initiation complex once per cell cycle. Binds the DnaA box (a 9 base pair repeat at the origin) and separates the double-stranded (ds)DNA. Forms a right-handed helical filament on oriC DNA; dsDNA binds to the exterior of the filament while single-stranded (ss)DNA is stabiized in the filament's interior. The ATP-DnaA-oriC complex binds and stabilizes one strand of the AT-rich DNA unwinding element (DUE), permitting loading of DNA polymerase. After initiation quickly degrades to an ADP-DnaA complex that is not apt for DNA replication. Binds acidic phospholipids. The sequence is that of Chromosomal replication initiator protein DnaA from Clavibacter sepedonicus (Clavibacter michiganensis subsp. sepedonicus).